The chain runs to 348 residues: Selenide, water dikinase (348 aa).

The active site involves selenocysteine 17. Residue selenocysteine 17 is a non-standard amino acid, selenocysteine. Residues lysine 20 and 48–50 (TAD) contribute to the ATP site. Aspartate 51 lines the Mg(2+) pocket. ATP is bound by residues aspartate 68, aspartate 91, and 138 to 140 (GHT). Mg(2+) is bound at residue aspartate 91. Aspartate 226 provides a ligand contact to Mg(2+).

It belongs to the selenophosphate synthase 1 family. Class I subfamily. As to quaternary structure, homodimer. Mg(2+) serves as cofactor.

The catalysed reaction is hydrogenselenide + ATP + H2O = selenophosphate + AMP + phosphate + 2 H(+). Functionally, synthesizes selenophosphate from selenide and ATP. The protein is Selenide, water dikinase of Clostridioides difficile (strain 630) (Peptoclostridium difficile).